Reading from the N-terminus, the 197-residue chain is Small ribosomal subunit protein uS11m (197 aa).

Basic and acidic residues predominate over residues 43–52; that stretch reads AAKEEVEKAE. Residues 43 to 66 form a disordered region; that stretch reads AAKEEVEKAETPAPAPSRSSFSIY.

This sequence belongs to the universal ribosomal protein uS11 family. Component of the mitochondrial ribosome small subunit (28S) which comprises a 12S rRNA and about 30 distinct proteins.

Its subcellular location is the mitochondrion. In Bos taurus (Bovine), this protein is Small ribosomal subunit protein uS11m (MRPS11).